Reading from the N-terminus, the 201-residue chain is Molybdenum cofactor guanylyltransferase (201 aa).

GTP is bound by residues 14–16, lysine 31, and aspartate 104; that span reads LAG. Aspartate 104 is a binding site for Mg(2+).

It belongs to the MobA family. As to quaternary structure, monomer. Mg(2+) is required as a cofactor.

Its subcellular location is the cytoplasm. It carries out the reaction Mo-molybdopterin + GTP + H(+) = Mo-molybdopterin guanine dinucleotide + diphosphate. Its function is as follows. Transfers a GMP moiety from GTP to Mo-molybdopterin (Mo-MPT) cofactor (Moco or molybdenum cofactor) to form Mo-molybdopterin guanine dinucleotide (Mo-MGD) cofactor. The sequence is that of Molybdenum cofactor guanylyltransferase from Helicobacter pylori (strain G27).